Reading from the N-terminus, the 152-residue chain is Deoxyuridine 5'-triphosphate nucleotidohydrolase (152 aa).

Residues 72-74 (RSG), Asn85, 89-91 (TID), and Lys99 each bind substrate.

The protein belongs to the dUTPase family. The cofactor is Mg(2+).

The enzyme catalyses dUTP + H2O = dUMP + diphosphate + H(+). It participates in pyrimidine metabolism; dUMP biosynthesis; dUMP from dCTP (dUTP route): step 2/2. In terms of biological role, this enzyme is involved in nucleotide metabolism: it produces dUMP, the immediate precursor of thymidine nucleotides and it decreases the intracellular concentration of dUTP so that uracil cannot be incorporated into DNA. The sequence is that of Deoxyuridine 5'-triphosphate nucleotidohydrolase from Bradyrhizobium diazoefficiens (strain JCM 10833 / BCRC 13528 / IAM 13628 / NBRC 14792 / USDA 110).